A 147-amino-acid polypeptide reads, in one-letter code: Large ribosomal subunit protein uL13 (147 aa).

Positions 126-147 (GGPEHPHAAQNPQPYEITQIAQ) are disordered.

The protein belongs to the universal ribosomal protein uL13 family. As to quaternary structure, part of the 50S ribosomal subunit.

In terms of biological role, this protein is one of the early assembly proteins of the 50S ribosomal subunit, although it is not seen to bind rRNA by itself. It is important during the early stages of 50S assembly. In Cutibacterium acnes (strain DSM 16379 / KPA171202) (Propionibacterium acnes), this protein is Large ribosomal subunit protein uL13.